The primary structure comprises 157 residues: Ribosomal RNA large subunit methyltransferase H (157 aa).

S-adenosyl-L-methionine-binding positions include L73, G105, and 124–129 (LSQMTF).

The protein belongs to the RNA methyltransferase RlmH family. Homodimer.

Its subcellular location is the cytoplasm. The catalysed reaction is pseudouridine(1915) in 23S rRNA + S-adenosyl-L-methionine = N(3)-methylpseudouridine(1915) in 23S rRNA + S-adenosyl-L-homocysteine + H(+). Functionally, specifically methylates the pseudouridine at position 1915 (m3Psi1915) in 23S rRNA. The sequence is that of Ribosomal RNA large subunit methyltransferase H from Flavobacterium psychrophilum (strain ATCC 49511 / DSM 21280 / CIP 103535 / JIP02/86).